The chain runs to 261 residues: UPF0246 protein AZOSEA34360 (261 aa).

This sequence belongs to the UPF0246 family.

This Aromatoleum aromaticum (strain DSM 19018 / LMG 30748 / EbN1) (Azoarcus sp. (strain EbN1)) protein is UPF0246 protein AZOSEA34360.